We begin with the raw amino-acid sequence, 123 residues long: uncharacterized protein (123 aa).

Positions 34 to 123 are disordered; the sequence is PEKISQTVKK…MNRDGGVKKE (90 aa). Basic and acidic residues-rich tracts occupy residues 50-60, 74-100, and 107-123; these read KKIDENKDKSP, TAKD…EFSQ, and EETR…VKKE.

The protein resides in the mitochondrion. This is an uncharacterized protein from Schizosaccharomyces pombe (strain 972 / ATCC 24843) (Fission yeast).